The chain runs to 279 residues: Protein COP1 SUPPRESSOR 2 (279 aa).

Disordered regions lie at residues 1–29 (MPPK…ISEE) and 57–79 (SSTA…EGEK). Over residues 68–79 (KPVEKTETEGEK) the composition is skewed to basic and acidic residues. A coiled-coil region spans residues 86–183 (DTFAQETAVL…EETEAAKKLL (98 aa)). The span at 217-229 (LRREHPELYKDRG) shows a compositional bias: basic and acidic residues. The disordered stretch occupies residues 217 to 279 (LRREHPELYK…KRERNRVMRR (63 aa)). The segment covering 250–260 (ADSGKSRQAAT) has biased composition (polar residues). A compositionally biased stretch (basic residues) spans 270–279 (KRERNRVMRR).

The protein belongs to the TLS1 family. In terms of assembly, interacts with COP1.

Its subcellular location is the nucleus. The protein localises to the nucleus speckle. In terms of biological role, inhibits E3 ubiquitin-protein ligase activity of COP1, a central repressor of seedling photomorphogenesis. Represses COP1-mediated turnover of HY5 in the dark. Required for primary root development under normal light growth conditions. The chain is Protein COP1 SUPPRESSOR 2 from Arabidopsis thaliana (Mouse-ear cress).